A 781-amino-acid chain; its full sequence is Molybdenum cofactor sulfurase (781 aa).

Residue K246 is modified to N6-(pyridoxal phosphate)lysine. Residue C413 is part of the active site. The 147-residue stretch at 635 to 781 (LRLLRQSGQR…MTCGDVVLVE (147 aa)) folds into the MOSC domain. S734 carries the phosphoserine modification.

This sequence belongs to the class-V pyridoxal-phosphate-dependent aminotransferase family. MOCOS subfamily. It depends on pyridoxal 5'-phosphate as a cofactor.

The enzyme catalyses Mo-molybdopterin + L-cysteine + AH2 = thio-Mo-molybdopterin + L-alanine + A + H2O. Its pathway is cofactor biosynthesis; molybdopterin biosynthesis. Its function is as follows. Sulfurates the molybdenum cofactor. Sulfation of molybdenum is essential for xanthine dehydrogenase (XDH) and aldehyde oxidase (ADO) enzymes in which molybdenum cofactor is liganded by 1 oxygen and 1 sulfur atom in active form. The polypeptide is Molybdenum cofactor sulfurase (Drosophila melanogaster (Fruit fly)).